A 102-amino-acid polypeptide reads, in one-letter code: Anti-lipopolysaccharide factor (102 aa).

Cys32 and Cys53 form a disulfide bridge.

In terms of biological role, binds tightly to LPS and thus specifically inhibits the LPS-mediated activation of the hemolymph coagulation. It has a strong antibacterial effect especially on the growth of Gram-negative bacteria. In Tachypleus tridentatus (Japanese horseshoe crab), this protein is Anti-lipopolysaccharide factor.